Consider the following 419-residue polypeptide: Carboxypeptidase A2 (419 aa).

The N-terminal stretch at 1–18 (MAMRLILFFGALFGHIYC) is a signal peptide. The propeptide at 19-114 (LETFVGDQVL…EMLFNRRRER (96 aa)) is activation peptide. A Peptidase M14 domain is found at 122–414 (AYHTLEEISQ…LGLKAIMEHV (293 aa)). The Zn(2+) site is built by His179 and Glu182. Residues 179-182 (HARE), Arg237, and 254-255 (NR) contribute to the substrate site. Cysteines 248 and 271 form a disulfide. Zn(2+) is bound at residue His306. Position 307–308 (307–308 (SY)) interacts with substrate. An intrachain disulfide couples Cys320 to Cys354. Tyr358 is a substrate binding site. Glu380 serves as the catalytic Proton donor/acceptor.

The protein belongs to the peptidase M14 family. Zn(2+) serves as cofactor.

It localises to the secreted. It catalyses the reaction Similar to that of carboxypeptidase A (EC 3.4.17.1), but with a preference for bulkier C-terminal residues.. Its function is as follows. Carboxypeptidase that catalyzes the release of a C-terminal amino acid, with a preference for large aromatic C-terminal residues. This Homo sapiens (Human) protein is Carboxypeptidase A2 (CPA2).